Reading from the N-terminus, the 300-residue chain is Alpha-tubulin N-acetyltransferase 1 (300 aa).

The region spanning 1–190 (MEFPFDVDAL…NNFVIFEGFF (190 aa)) is the N-acetyltransferase domain. At lysine 56 the chain carries N6-acetyllysine; by autocatalysis. 124-137 (FYIHESLQRHGHGR) is a binding site for acetyl-CoA. At lysine 146 the chain carries N6-acetyllysine; by autocatalysis. 160 to 169 (SQKLLKFLNK) is a binding site for acetyl-CoA. An N6-acetyllysine; by autocatalysis mark is found at lysine 210 and lysine 221. Disordered regions lie at residues 229–263 (PLNR…RPFV) and 280–300 (TARL…RRTR). A phosphoserine mark is found at serine 249 and serine 253. Arginine 282 carries the asymmetric dimethylarginine modification. Serine 292 carries the phosphoserine modification. Arginine 300 carries the post-translational modification Omega-N-methylarginine.

The protein belongs to the acetyltransferase ATAT1 family. In terms of assembly, component of the BBSome complex. Interacts with AP2 alpha-adaptins, including AP2A2, but not with AP1 gamma-adaptin (AP1G1/AP1G2); this interaction is required for efficient alpha-tubulin acetylation, hence clathrin-coated pits are sites of microtubule acetylation. Autoacetylation strongly increases tubulin acetylation.

The protein localises to the cytoplasm. It localises to the membrane. It is found in the clathrin-coated pit. Its subcellular location is the cell junction. The protein resides in the focal adhesion. The protein localises to the cell projection. It localises to the axon. It is found in the cytoskeleton. Its subcellular location is the spindle. It carries out the reaction L-lysyl-[alpha-tubulin] + acetyl-CoA = N(6)-acetyl-L-lysyl-[alpha-tubulin] + CoA + H(+). Specifically acetylates 'Lys-40' in alpha-tubulin on the lumenal side of microtubules. Promotes microtubule destabilization and accelerates microtubule dynamics; this activity may be independent of acetylation activity. Acetylates alpha-tubulin with a slow enzymatic rate, due to a catalytic site that is not optimized for acetyl transfer. Enters the microtubule through each end and diffuses quickly throughout the lumen of microtubules. Acetylates only long/old microtubules because of its slow acetylation rate since it does not have time to act on dynamically unstable microtubules before the enzyme is released. Required for normal sperm flagellar function. Promotes directional cell locomotion and chemotaxis, through AP2A2-dependent acetylation of alpha-tubulin at clathrin-coated pits that are concentrated at the leading edge of migrating cells. May facilitate primary cilium assembly. In Sus scrofa (Pig), this protein is Alpha-tubulin N-acetyltransferase 1.